We begin with the raw amino-acid sequence, 647 residues long: uncharacterized protein (647 aa).

Helical transmembrane passes span 14 to 38, 61 to 78, 90 to 110, 140 to 158, and 178 to 195; these read LFPI…LAVW, VVAL…TTLF, LWLT…PAFI, LSAV…VIYW, and VIAL…RSSF.

It localises to the cell membrane. This is an uncharacterized protein from Haemophilus influenzae (strain ATCC 51907 / DSM 11121 / KW20 / Rd).